The primary structure comprises 553 residues: Putative transport protein YidE (553 aa).

5 helical membrane passes run 4–24 (IALT…IGNI), 28–48 (GVGF…HFVD), 65–85 (FGLI…FFAS), 95–115 (LFAV…HKIF), and 158–178 (MSYA…MWLM). RCK C-terminal domains lie at 192–276 (KHES…VIGK) and 279–361 (DTSL…VVGN). 6 consecutive transmembrane segments (helical) span residues 371–391 (MLPV…PLFV), 393–413 (GFPV…ALIL), 437–457 (LGIV…FVDT), 464–484 (LSWI…VGLL), 493–513 (YLTL…LAFA), and 533–553 (LVMF…WGMG).

It belongs to the AAE transporter (TC 2.A.81) family. YidE subfamily.

The protein localises to the cell membrane. The protein is Putative transport protein YidE of Salmonella heidelberg (strain SL476).